A 97-amino-acid polypeptide reads, in one-letter code: Large ribosomal subunit protein eL21 (97 aa).

It belongs to the eukaryotic ribosomal protein eL21 family.

This Methanococcoides burtonii (strain DSM 6242 / NBRC 107633 / OCM 468 / ACE-M) protein is Large ribosomal subunit protein eL21.